The following is a 191-amino-acid chain: Putative 3-methyladenine DNA glycosylase (191 aa).

It belongs to the DNA glycosylase MPG family.

This is Putative 3-methyladenine DNA glycosylase from Carboxydothermus hydrogenoformans (strain ATCC BAA-161 / DSM 6008 / Z-2901).